A 415-amino-acid polypeptide reads, in one-letter code: 3-isopropylmalate dehydratase large subunit (415 aa).

Positions 295, 353, and 356 each coordinate [4Fe-4S] cluster.

The protein belongs to the aconitase/IPM isomerase family. LeuC type 2 subfamily. Heterodimer of LeuC and LeuD. [4Fe-4S] cluster is required as a cofactor.

The catalysed reaction is (2R,3S)-3-isopropylmalate = (2S)-2-isopropylmalate. The protein operates within amino-acid biosynthesis; L-leucine biosynthesis; L-leucine from 3-methyl-2-oxobutanoate: step 2/4. Catalyzes the isomerization between 2-isopropylmalate and 3-isopropylmalate, via the formation of 2-isopropylmaleate. This is 3-isopropylmalate dehydratase large subunit from Pyrobaculum aerophilum (strain ATCC 51768 / DSM 7523 / JCM 9630 / CIP 104966 / NBRC 100827 / IM2).